Here is a 172-residue protein sequence, read N- to C-terminus: Shikimate kinase (172 aa).

11–16 (GSGKTT) contributes to the ATP binding site. A Mg(2+)-binding site is contributed by threonine 15. The substrate site is built by aspartate 33, arginine 57, and glycine 79. Arginine 117 lines the ATP pocket. Arginine 136 lines the substrate pocket.

This sequence belongs to the shikimate kinase family. In terms of assembly, monomer. Mg(2+) is required as a cofactor.

Its subcellular location is the cytoplasm. It catalyses the reaction shikimate + ATP = 3-phosphoshikimate + ADP + H(+). It participates in metabolic intermediate biosynthesis; chorismate biosynthesis; chorismate from D-erythrose 4-phosphate and phosphoenolpyruvate: step 5/7. Catalyzes the specific phosphorylation of the 3-hydroxyl group of shikimic acid using ATP as a cosubstrate. The polypeptide is Shikimate kinase (Caldicellulosiruptor bescii (strain ATCC BAA-1888 / DSM 6725 / KCTC 15123 / Z-1320) (Anaerocellum thermophilum)).